Here is a 161-residue protein sequence, read N- to C-terminus: Troponin C, slow skeletal and cardiac muscles (161 aa).

An N-acetylmethionine modification is found at M1. 4 EF-hand domains span residues 16–51, 52–87, 92–127, and 128–161; these read QKNE…LGQN, PTPE…CMKD, KTEE…TGET, and ITED…KGVE. Residues D65, D67, S69, T71, E76, D105, N107, D109, Y111, E116, D141, N143, D145, R147, and E152 each coordinate Ca(2+).

It belongs to the troponin C family.

Its function is as follows. Troponin is the central regulatory protein of striated muscle contraction. Tn consists of three components: Tn-I which is the inhibitor of actomyosin ATPase, Tn-T which contains the binding site for tropomyosin and Tn-C. The binding of calcium to Tn-C abolishes the inhibitory action of Tn on actin filaments. In Gallus gallus (Chicken), this protein is Troponin C, slow skeletal and cardiac muscles (TNNC1).